The following is a 158-amino-acid chain: Oocyte-secreted protein 2 (158 aa).

The signal sequence occupies residues 1–17 (MALEVLMLLAVLIWTGA).

Belongs to the PLAC1 family. As to expression, highly expressed in oocytes.

Its subcellular location is the secreted. The protein resides in the cytoplasm. In terms of biological role, involved in oocyte maturation. This is Oocyte-secreted protein 2 (OOSP2) from Homo sapiens (Human).